Here is a 78-residue protein sequence, read N- to C-terminus: Small ribosomal subunit protein bS18 (78 aa).

The protein belongs to the bacterial ribosomal protein bS18 family. As to quaternary structure, part of the 30S ribosomal subunit. Forms a tight heterodimer with protein bS6.

Binds as a heterodimer with protein bS6 to the central domain of the 16S rRNA, where it helps stabilize the platform of the 30S subunit. This chain is Small ribosomal subunit protein bS18, found in Lactobacillus johnsonii (strain CNCM I-12250 / La1 / NCC 533).